The following is a 131-amino-acid chain: Large ribosomal subunit protein bL17 (131 aa).

This sequence belongs to the bacterial ribosomal protein bL17 family. In terms of assembly, part of the 50S ribosomal subunit. Contacts protein L32.

This is Large ribosomal subunit protein bL17 from Janthinobacterium sp. (strain Marseille) (Minibacterium massiliensis).